A 203-amino-acid polypeptide reads, in one-letter code: Endo-type membrane-bound lytic murein transglycosylase A (203 aa).

Residues 1–15 form the signal peptide; that stretch reads MKLRWFAFLVVLLAG. A lipid anchor (N-palmitoyl cysteine) is attached at C16. Residue C16 is the site of S-diacylglycerol cysteine attachment.

The protein belongs to the transglycosylase Slt family.

Its subcellular location is the cell outer membrane. It carries out the reaction Endolytic cleavage of the (1-&gt;4)-beta-glycosidic linkage between N-acetylmuramic acid (MurNAc) and N-acetylglucosamine (GlcNAc) residues in peptidoglycan with concomitant formation of a 1,6-anhydrobond in the MurNAc residue.. Its function is as follows. Murein-degrading enzyme. May play a role in recycling of muropeptides during cell elongation and/or cell division. Preferentially cleaves at a distance of more than two disaccharide units from the ends of the glycan chain. The polypeptide is Endo-type membrane-bound lytic murein transglycosylase A (Escherichia fergusonii (strain ATCC 35469 / DSM 13698 / CCUG 18766 / IAM 14443 / JCM 21226 / LMG 7866 / NBRC 102419 / NCTC 12128 / CDC 0568-73)).